Reading from the N-terminus, the 359-residue chain is MSKNIVVLPGDHVGTEITNEAIKVLNAISEARPSIKFNFEHHLIGGAAIDATGVPLPDEASKKADAVLLGAVGGPKWGTGSVRPEQGLLKIRKELGLYANLRPCNFASDSLLDLSPLKPEYAKGTDFVVVRELVGGIYFGERKEDEGDGVAWDSEKYSVPEVQRITRMAAFLALQHNPPLPIWSLDKANVLASSRLWRKTVEETIKNEFPQLTVQHQLIDSAAMILVKSPTKLNGIVITNNMFGDIISDEASVIPGSLGLLPSASLASLPDTNKAFGLYEPCHGSAPDLPANKVNPIATILSAAMMLKLSLDLVEEGRAVEEAVRKVLDSGIRTGDLGGSNSTTEVGDAVAKAVKEILA.

Position 74 to 85 (glycine 74 to glutamate 85) interacts with NAD(+). Substrate contacts are provided by arginine 92, arginine 102, arginine 131, and aspartate 220. Aspartate 220, aspartate 245, and aspartate 249 together coordinate Mg(2+). Glycine 284–asparagine 295 serves as a coordination point for NAD(+).

The protein belongs to the isocitrate and isopropylmalate dehydrogenases family. Homodimer. It depends on Mg(2+) as a cofactor. Requires Mn(2+) as cofactor.

It is found in the cytoplasm. The catalysed reaction is (2R,3S)-3-isopropylmalate + NAD(+) = 4-methyl-2-oxopentanoate + CO2 + NADH. Its pathway is amino-acid biosynthesis; L-leucine biosynthesis; L-leucine from 3-methyl-2-oxobutanoate: step 3/4. Catalyzes the oxidation of 3-carboxy-2-hydroxy-4-methylpentanoate (3-isopropylmalate) to 3-carboxy-4-methyl-2-oxopentanoate. The product decarboxylates to 4-methyl-2 oxopentanoate. This Kluyveromyces marxianus (Yeast) protein is 3-isopropylmalate dehydrogenase (LEU2).